A 249-amino-acid polypeptide reads, in one-letter code: 5'-nucleotidase SurE (249 aa).

A divalent metal cation-binding residues include aspartate 9, aspartate 10, serine 40, and asparagine 92.

The protein belongs to the SurE nucleotidase family. It depends on a divalent metal cation as a cofactor.

It localises to the cytoplasm. It catalyses the reaction a ribonucleoside 5'-phosphate + H2O = a ribonucleoside + phosphate. Nucleotidase that shows phosphatase activity on nucleoside 5'-monophosphates. The polypeptide is 5'-nucleotidase SurE (Shewanella sp. (strain MR-4)).